The chain runs to 297 residues: Protein muscleblind (297 aa).

C3H1-type zinc fingers lie at residues 18–46 (WLQL…HPPA) and 52–80 (NGKV…HPPQ).

Belongs to the muscleblind family. In terms of tissue distribution, expressed in embryonic muscle cells.

The protein resides in the nucleus. In terms of biological role, required for terminal differentiation of photoreceptor cells. Vital for embryonic development. The sequence is that of Protein muscleblind (mbl) from Drosophila melanogaster (Fruit fly).